We begin with the raw amino-acid sequence, 290 residues long: Probable aquaporin PIP2-1 (290 aa).

2 helical membrane passes run 43–63 (AVIA…ATVI) and 80–100 (CGGV…FILV). An NPA 1 motif is present at residues 112–114 (NPA). Helical transmembrane passes span 131–151 (ILYI…VKAF), 173–193 (GTGL…VFSA), and 207–227 (VLAP…TIPI). The short motif at 233–235 (NPA) is the NPA 2 element. Residues 255 to 275 (IFWVGPFVGAAIAAFYHQYIL) traverse the membrane as a helical segment.

Belongs to the MIP/aquaporin (TC 1.A.8) family. PIP (TC 1.A.8.11) subfamily. As to expression, expressed in roots, leaves and anthers.

It localises to the cell membrane. Aquaporins facilitate the transport of water and small neutral solutes across cell membranes. The chain is Probable aquaporin PIP2-1 (PIP2-1) from Oryza sativa subsp. japonica (Rice).